Here is an 830-residue protein sequence, read N- to C-terminus: Lon protease (830 aa).

Residues 1–28 (MTFDTNDDSIAKNSLAPYNQETEQQQEE) form a disordered region. The 196-residue stretch at 50–245 (IPILPLRDVV…LVITHLTHEA (196 aa)) folds into the Lon N-terminal domain. Residue 397–404 (GPPGVGKT) coordinates ATP. Residues 633–814 (TLPPGVALGL…DEVLPLAFSE (182 aa)) enclose the Lon proteolytic domain. Active-site residues include S720 and K763.

Belongs to the peptidase S16 family. Homohexamer. Organized in a ring with a central cavity.

It is found in the cytoplasm. The catalysed reaction is Hydrolysis of proteins in presence of ATP.. In terms of biological role, ATP-dependent serine protease that mediates the selective degradation of mutant and abnormal proteins as well as certain short-lived regulatory proteins. Required for cellular homeostasis and for survival from DNA damage and developmental changes induced by stress. Degrades polypeptides processively to yield small peptide fragments that are 5 to 10 amino acids long. Binds to DNA in a double-stranded, site-specific manner. The sequence is that of Lon protease from Lawsonia intracellularis (strain PHE/MN1-00).